A 71-amino-acid chain; its full sequence is NAD(P)H-quinone oxidoreductase subunit O (71 aa).

It belongs to the complex I NdhO subunit family. In terms of assembly, NDH-1 can be composed of about 15 different subunits; different subcomplexes with different compositions have been identified which probably have different functions.

The protein resides in the cellular thylakoid membrane. The enzyme catalyses a plastoquinone + NADH + (n+1) H(+)(in) = a plastoquinol + NAD(+) + n H(+)(out). The catalysed reaction is a plastoquinone + NADPH + (n+1) H(+)(in) = a plastoquinol + NADP(+) + n H(+)(out). Its function is as follows. NDH-1 shuttles electrons from an unknown electron donor, via FMN and iron-sulfur (Fe-S) centers, to quinones in the respiratory and/or the photosynthetic chain. The immediate electron acceptor for the enzyme in this species is believed to be plastoquinone. Couples the redox reaction to proton translocation, and thus conserves the redox energy in a proton gradient. Cyanobacterial NDH-1 also plays a role in inorganic carbon-concentration. This chain is NAD(P)H-quinone oxidoreductase subunit O, found in Nostoc punctiforme (strain ATCC 29133 / PCC 73102).